A 216-amino-acid chain; its full sequence is Protein Syd (216 aa).

It belongs to the Syd family.

The protein localises to the cell inner membrane. In terms of biological role, interacts with the SecY protein in vivo. May bind preferentially to an uncomplexed state of SecY, thus functioning either as a chelating agent for excess SecY in the cell or as a regulatory factor that negatively controls the translocase function. This Shewanella baltica (strain OS185) protein is Protein Syd.